Consider the following 323-residue polypeptide: uncharacterized protein (323 aa).

Residues 1-45 (MLATLSQIRAWSTEHLIDAAGYWTETADRWEDVFLQMRNQAHAIA) form the signal peptide. Residues 186 to 227 (FKQDGPTPPPPGAPHPSGGADGPYSDPITSMMLPPAGTEAPV) form a disordered region. 2 consecutive transmembrane segments (helical) span residues 269 to 289 (SAEW…VVGT) and 290 to 310 (ALAI…LLGV).

The protein localises to the cell membrane. This is an uncharacterized protein from Mycobacterium tuberculosis (strain CDC 1551 / Oshkosh).